Consider the following 172-residue polypeptide: Large ribosomal subunit protein uL10 (172 aa).

Belongs to the universal ribosomal protein uL10 family. As to quaternary structure, part of the ribosomal stalk of the 50S ribosomal subunit. The N-terminus interacts with L11 and the large rRNA to form the base of the stalk. The C-terminus forms an elongated spine to which L12 dimers bind in a sequential fashion forming a multimeric L10(L12)X complex.

Functionally, forms part of the ribosomal stalk, playing a central role in the interaction of the ribosome with GTP-bound translation factors. The protein is Large ribosomal subunit protein uL10 of Caulobacter sp. (strain K31).